Consider the following 424-residue polypeptide: Serine--tRNA ligase (424 aa).

229–231 provides a ligand contact to L-serine; sequence TAE. 260–262 is an ATP binding site; that stretch reads RRE. Glu-283 lines the L-serine pocket. Residue 347–350 participates in ATP binding; that stretch reads EVSS. L-serine is bound at residue Ser-383.

The protein belongs to the class-II aminoacyl-tRNA synthetase family. Type-1 seryl-tRNA synthetase subfamily. As to quaternary structure, homodimer. The tRNA molecule binds across the dimer.

The protein localises to the cytoplasm. The enzyme catalyses tRNA(Ser) + L-serine + ATP = L-seryl-tRNA(Ser) + AMP + diphosphate + H(+). It catalyses the reaction tRNA(Sec) + L-serine + ATP = L-seryl-tRNA(Sec) + AMP + diphosphate + H(+). Its pathway is aminoacyl-tRNA biosynthesis; selenocysteinyl-tRNA(Sec) biosynthesis; L-seryl-tRNA(Sec) from L-serine and tRNA(Sec): step 1/1. Its function is as follows. Catalyzes the attachment of serine to tRNA(Ser). Is also able to aminoacylate tRNA(Sec) with serine, to form the misacylated tRNA L-seryl-tRNA(Sec), which will be further converted into selenocysteinyl-tRNA(Sec). In Roseiflexus sp. (strain RS-1), this protein is Serine--tRNA ligase.